The primary structure comprises 210 residues: UPF0301 protein CPS_1252 (210 aa).

This sequence belongs to the UPF0301 (AlgH) family.

The sequence is that of UPF0301 protein CPS_1252 from Colwellia psychrerythraea (strain 34H / ATCC BAA-681) (Vibrio psychroerythus).